Here is a 250-residue protein sequence, read N- to C-terminus: MAEQASSFTDRLAARFAGAQIAVALPRGEVTLEVAAADWHATCLALRDELGFEQLSDLCGVDYLGYGSGEWDTADVSSQGFSRGVEGKAVGRFAWGEFPSQESSAGAQPQQLPKQRFAVVAQLISYQHNQRLRVRCYAPDEQVPLVASVTDIWPGVNWFEREAFDLFGIVFDGHPDLRRILTDYGFVGHPFRKDFPLIGNVEVRYDEERKRVVYEPVTSVEPRVGVPRVIRDDARYETAAGEVGRSETAK.

Belongs to the complex I 30 kDa subunit family. As to quaternary structure, NDH-1 is composed of 14 different subunits. Subunits NuoB, C, D, E, F, and G constitute the peripheral sector of the complex.

The protein localises to the cell inner membrane. The enzyme catalyses a quinone + NADH + 5 H(+)(in) = a quinol + NAD(+) + 4 H(+)(out). Its function is as follows. NDH-1 shuttles electrons from NADH, via FMN and iron-sulfur (Fe-S) centers, to quinones in the respiratory chain. The immediate electron acceptor for the enzyme in this species is believed to be ubiquinone. Couples the redox reaction to proton translocation (for every two electrons transferred, four hydrogen ions are translocated across the cytoplasmic membrane), and thus conserves the redox energy in a proton gradient. The polypeptide is NADH-quinone oxidoreductase subunit C (Xanthomonas oryzae pv. oryzae (strain PXO99A)).